The primary structure comprises 1181 residues: Poly [ADP-ribose] polymerase tankyrase (1181 aa).

ANK repeat units follow at residues 56 to 85 (RKST…SIQA), 89 to 118 (GGLH…SPNT), 122 to 151 (WNYT…NHTI), 209 to 238 (RRST…DVHA), 242 to 271 (GGLV…NVNA), 275 to 304 (WAFT…DPTL), 362 to 394 (TGDT…LLNE), 398 to 427 (AFLT…KVNA), 431 to 458 (LGQT…DTNI), 483 to 513 (DSET…SVNC), 519 to 548 (RHST…EVYA), 552 to 581 (GGLV…NVNV), 585 to 614 (WKFT…DPMK), 638 to 668 (RGPS…NCRD), 672 to 701 (RNST…DVNA), 705 to 734 (GGLI…VVNA), 738 to 767 (WGFT…DAYM), and 771 to 799 (EGQT…LSQQ). Disordered regions lie at residues 807 to 834 (SLTS…SAIL) and 864 to 886 (RISP…DLLP). An SAM domain is found at 889–952 (DTITNVSGFL…LKGIAQLRST (64 aa)). The PARP catalytic domain maps to 969–1174 (LPDDKEFVAV…YQIVKPDDSS (206 aa)). 4 residues coordinate Zn(2+): cysteine 1091, histidine 1094, cysteine 1099, and cysteine 1102.

This sequence belongs to the ARTD/PARP family. Interacts (via ANK repeats) with PI31.

It carries out the reaction NAD(+) + (ADP-D-ribosyl)n-acceptor = nicotinamide + (ADP-D-ribosyl)n+1-acceptor + H(+).. The enzyme catalyses L-aspartyl-[protein] + NAD(+) = 4-O-(ADP-D-ribosyl)-L-aspartyl-[protein] + nicotinamide. The catalysed reaction is L-glutamyl-[protein] + NAD(+) = 5-O-(ADP-D-ribosyl)-L-glutamyl-[protein] + nicotinamide. Its function is as follows. Stimulates proteasome activity, probably by ADP-ribosylation of PI31. Modulates 26S proteasome assembly. The protein is Poly [ADP-ribose] polymerase tankyrase of Drosophila melanogaster (Fruit fly).